Consider the following 123-residue polypeptide: WAP four-disulfide core domain protein 5 (123 aa).

The N-terminal stretch at 1 to 24 is a signal peptide; it reads MRTQSLLLLGALLAVGSQLPAVFG. WAP domains are found at residues 27–73 and 74–121; these read KGEK…CVPR and VSVK…RDPA. Intrachain disulfides connect Cys-34–Cys-62, Cys-41–Cys-66, Cys-49–Cys-61, Cys-55–Cys-70, Cys-81–Cys-109, Cys-88–Cys-113, Cys-96–Cys-108, and Cys-102–Cys-117.

The protein resides in the secreted. In terms of biological role, putative acid-stable proteinase inhibitor. The protein is WAP four-disulfide core domain protein 5 (WFDC5) of Pan troglodytes (Chimpanzee).